We begin with the raw amino-acid sequence, 146 residues long: MGEVKHLQINYKTDELFADFREFGNKNLYMIEELKGQMIDASSDSPFYGIFVGNKLVARMALLDKGEVEETYFPNSNDYILLWKLEVLDTYQRRGYAKQLLNFAKENKKPIKAIARNNSKEFFLKQGFKDVETKNPEGHDILIWNP.

One can recognise an N-acetyltransferase domain in the interval 7–146; that stretch reads LQINYKTDEL…EGHDILIWNP (140 aa).

This is an uncharacterized protein from Staphylococcus epidermidis (strain ATCC 12228 / FDA PCI 1200).